The following is a 136-amino-acid chain: Nucleoside diphosphate kinase (136 aa).

ATP is bound by residues Lys10, Phe58, Arg86, Thr92, Arg104, and Asn114. Residue His117 is the Pros-phosphohistidine intermediate of the active site.

It belongs to the NDK family. As to quaternary structure, homotetramer. The cofactor is Mg(2+).

The protein localises to the cytoplasm. It catalyses the reaction a 2'-deoxyribonucleoside 5'-diphosphate + ATP = a 2'-deoxyribonucleoside 5'-triphosphate + ADP. It carries out the reaction a ribonucleoside 5'-diphosphate + ATP = a ribonucleoside 5'-triphosphate + ADP. In terms of biological role, major role in the synthesis of nucleoside triphosphates other than ATP. The ATP gamma phosphate is transferred to the NDP beta phosphate via a ping-pong mechanism, using a phosphorylated active-site intermediate. This is Nucleoside diphosphate kinase from Corynebacterium glutamicum (strain R).